A 152-amino-acid chain; its full sequence is SsrA-binding protein (152 aa).

Positions 124–152 (KKLHDKRDTAAERDWQRDKARLMKGDRGD) are disordered. Residues 128 to 152 (DKRDTAAERDWQRDKARLMKGDRGD) are compositionally biased toward basic and acidic residues.

It belongs to the SmpB family.

It localises to the cytoplasm. Functionally, required for rescue of stalled ribosomes mediated by trans-translation. Binds to transfer-messenger RNA (tmRNA), required for stable association of tmRNA with ribosomes. tmRNA and SmpB together mimic tRNA shape, replacing the anticodon stem-loop with SmpB. tmRNA is encoded by the ssrA gene; the 2 termini fold to resemble tRNA(Ala) and it encodes a 'tag peptide', a short internal open reading frame. During trans-translation Ala-aminoacylated tmRNA acts like a tRNA, entering the A-site of stalled ribosomes, displacing the stalled mRNA. The ribosome then switches to translate the ORF on the tmRNA; the nascent peptide is terminated with the 'tag peptide' encoded by the tmRNA and targeted for degradation. The ribosome is freed to recommence translation, which seems to be the essential function of trans-translation. The protein is SsrA-binding protein of Caulobacter vibrioides (strain ATCC 19089 / CIP 103742 / CB 15) (Caulobacter crescentus).